We begin with the raw amino-acid sequence, 209 residues long: Uracil phosphoribosyltransferase (209 aa).

5-phospho-alpha-D-ribose 1-diphosphate-binding positions include R79, R104, and 131-139 (DPMLATGGS). Residues I194 and 199–201 (GDA) each bind uracil. Residue D200 coordinates 5-phospho-alpha-D-ribose 1-diphosphate.

The protein belongs to the UPRTase family. Requires Mg(2+) as cofactor.

The catalysed reaction is UMP + diphosphate = 5-phospho-alpha-D-ribose 1-diphosphate + uracil. Its pathway is pyrimidine metabolism; UMP biosynthesis via salvage pathway; UMP from uracil: step 1/1. With respect to regulation, allosterically activated by GTP. Catalyzes the conversion of uracil and 5-phospho-alpha-D-ribose 1-diphosphate (PRPP) to UMP and diphosphate. This is Uracil phosphoribosyltransferase from Streptococcus equi subsp. zooepidemicus (strain MGCS10565).